The following is a 1937-amino-acid chain: Myosin-8 (1937 aa).

In terms of domain architecture, Myosin N-terminal SH3-like spans Asp-35–Pro-84. Phosphothreonine occurs at positions 66 and 71. In terms of domain architecture, Myosin motor spans Asp-88–Asp-781. At Lys-132 the chain carries N6,N6,N6-trimethyllysine. Gly-181 to Thr-188 contributes to the ATP binding site. Tyr-389 carries the phosphotyrosine modification. At Thr-419 the chain carries Phosphothreonine. Tyr-424 bears the Phosphotyrosine mark. Ser-625 carries the phosphoserine modification. Positions Leu-658–Glu-680 are actin-binding. At His-756 the chain carries Pros-methylhistidine. An actin-binding region spans residues Lys-760–Gly-774. Positions Asp-781–Ser-813 constitute an IQ domain. Residues Leu-842–Glu-1937 adopt a coiled-coil conformation. A phosphoserine mark is found at Ser-1091 and Ser-1095. Residues Ile-1125–Glu-1171 form a disordered region. The span at Ala-1127 to Glu-1155 shows a compositional bias: basic and acidic residues. Residues Ser-1161 and Ser-1236 each carry the phosphoserine modification. The residue at position 1254 (Thr-1254) is a Phosphothreonine. Ser-1260 is modified (phosphoserine). Thr-1285 is modified (phosphothreonine). Phosphoserine occurs at positions 1291, 1302, and 1305. Tyr-1463 bears the Phosphotyrosine mark. Thr-1466 is modified (phosphothreonine). Tyr-1491 is subject to Phosphotyrosine. Ser-1494 carries the phosphoserine modification. Thr-1500 carries the phosphothreonine modification. Position 1513 is a phosphoserine (Ser-1513). Position 1516 is a phosphothreonine (Thr-1516). Residues Ser-1553, Ser-1573, Ser-1602, Ser-1713, and Ser-1725 each carry the phosphoserine modification. Position 1729 is a phosphothreonine (Thr-1729). Phosphoserine is present on Ser-1738.

Belongs to the TRAFAC class myosin-kinesin ATPase superfamily. Myosin family. As to quaternary structure, muscle myosin is a hexameric protein that consists of 2 heavy chain subunits (MHC), 2 alkali light chain subunits (MLC) and 2 regulatory light chain subunits (MLC-2).

Its subcellular location is the cytoplasm. The protein resides in the myofibril. Functionally, muscle contraction. In Mus musculus (Mouse), this protein is Myosin-8 (Myh8).